The primary structure comprises 440 residues: MKAAVDLKPTLTIIKTEKVDLELFPSPDMECADVPLLTPSSKEMMSQALKATFSGFTKEQQRLGIPKDPRQWTETHVRDWVMWAVNEFSLKGVDFQKFCMSGAALCALGKECFLELAPDFVGDILWEHLEILQKEDVKPYQVNGANPTYPESCYTSDYFISYGIEHAQCVPPSEFSEPSFITESYQTLHPISSEELLSLKYENDYPSVILQDPLQTDTLQTDYFAIKQEVLTPDNMCLGRASRGKLGGQDSFESVESYDSCDRLTQSWSSQSSFNSLQRVPSYDSFDYEDYPAALPNHKPKGTFKDYVRDRADLNKDKPVIPAAALAGYTGSGPIQLWQFLLELLTDKSCQSFISWTGDGWEFKLSDPDEVARRWGKRKNKPKMNYEKLSRGLRYYYDKNIIHKTAGKRYVYRFVCDLQSLLGYTPEELHAMLDVKPDAD.

Lysine 8 and lysine 15 each carry N6-acetyllysine; alternate. Residues lysine 8 and lysine 15 each participate in a glycyl lysine isopeptide (Lys-Gly) (interchain with G-Cter in SUMO2); alternate cross-link. Lysine 15 is covalently cross-linked (Glycyl lysine isopeptide (Lys-Gly) (interchain with G-Cter in SUMO); alternate). Position 38 is a phosphothreonine; by MAPK (threonine 38). The PNT domain maps to 51-136 (ATFSGFTKEQ…EHLEILQKED (86 aa)). The activation domain; required for transcription activation stretch occupies residues 130–243 (EILQKEDVKP…DNMCLGRASR (114 aa)). A Glycyl lysine isopeptide (Lys-Gly) (interchain with G-Cter in SUMO2) cross-link involves residue lysine 138. Tyrosine 223 is subject to Phosphotyrosine. Residue lysine 227 forms a Glycyl lysine isopeptide (Lys-Gly) (interchain with G-Cter in SUMO) linkage. Serine 251 carries the phosphoserine; by CaMK2 modification. Serine 254 is modified (phosphoserine). Threonine 265 is modified (phosphothreonine). Phosphoserine is present on residues serine 267 and serine 270. 2 positions are modified to phosphoserine; by CaMK2: serine 282 and serine 285. A helix HI-1 region spans residues 304-312 (FKDYVRDRA). Residue lysine 305 is modified to N6-acetyllysine. The segment at 323-330 (AAALAGYT) is helix HI-2. Residues 335–415 (IQLWQFLLEL…AGKRYVYRFV (81 aa)) constitute a DNA-binding region (ETS). Residues 418–422 (LQSLL) are helix H4. A helix H5 region spans residues 426–432 (PEELHAM).

This sequence belongs to the ETS family. As to quaternary structure, binds DNA as a homodimer; homodimerization is required for transcription activation. Interacts with MAF and MAFB. Interacts with PAX5; the interaction alters DNA-binding properties. Interacts with DAXX. Interacts with UBE2I. Interacts with SP100; the interaction is direct and modulates ETS1 transcriptional activity. Phosphorylation at Ser-251, Ser-282 and Ser-285 by CaMK2/CaMKII in response to calcium signaling decreases affinity for DNA: an increasing number of phosphoserines causes DNA-binding to become progressively weaker. In terms of processing, sumoylated on Lys-15 and Lys-227, preferentially with SUMO2; which inhibits transcriptional activity. Post-translationally, ubiquitinated; which induces proteasomal degradation.

The protein resides in the nucleus. It localises to the cytoplasm. Its activity is regulated as follows. Autoinhibited by a module composed of four alpha helices (HI-1, HI-2, H4, and H5) that flank the DNA-binding ETS domain, reducing the affinity for DNA. Phosphorylation by CaMK2/CaMKII in response to calcium signaling decreases affinity for DNA. Functionally, transcription factor. Directly controls the expression of cytokine and chemokine genes in a wide variety of different cellular contexts. May control the differentiation, survival and proliferation of lymphoid cells. May also regulate angiogenesis through regulation of expression of genes controlling endothelial cell migration and invasion. The polypeptide is Protein C-ets-1 (Ets1) (Mus musculus (Mouse)).